The primary structure comprises 89 residues: Small ribosomal subunit protein uS15 (89 aa).

This sequence belongs to the universal ribosomal protein uS15 family. Part of the 30S ribosomal subunit. Forms a bridge to the 50S subunit in the 70S ribosome, contacting the 23S rRNA.

Functionally, one of the primary rRNA binding proteins, it binds directly to 16S rRNA where it helps nucleate assembly of the platform of the 30S subunit by binding and bridging several RNA helices of the 16S rRNA. Forms an intersubunit bridge (bridge B4) with the 23S rRNA of the 50S subunit in the ribosome. This chain is Small ribosomal subunit protein uS15, found in Chlorobium chlorochromatii (strain CaD3).